Consider the following 456-residue polypeptide: Crinkler effector protein 2 (456 aa).

The N-terminal stretch at 1-17 is a signal peptide; sequence MVKLVCAIVGVAGSAFP. The LQLFLAK domain stretch occupies residues 18–54; the sequence is VDTDASQLVGDLKKAIKAENAMTFTGDAKDLQLFLAK. Residues 55–136 are DWL domain; sequence QPVDDESGKE…NMELPSSEQI (82 aa). Residues 137–143 carry the HVLVXXP motif motif; the sequence is HVLVVVP. A glycan (N-linked (GlcNAc...) asparagine) is linked at Asn338.

This sequence belongs to the Crinkler effector family.

Its subcellular location is the secreted. The protein resides in the host nucleus. Its function is as follows. Secreted effector that effector that induces cell death when expressed in host plants. Induces the expression of defense response genes in tomato. The polypeptide is Crinkler effector protein 2 (Phytophthora infestans (Potato late blight agent)).